Consider the following 48-residue polypeptide: uncharacterized protein (48 aa).

Its subcellular location is the plastid. It is found in the cyanelle. This is an uncharacterized protein from Cyanophora paradoxa.